We begin with the raw amino-acid sequence, 202 residues long: Imidazoleglycerol-phosphate dehydratase (202 aa).

The protein belongs to the imidazoleglycerol-phosphate dehydratase family.

The protein localises to the cytoplasm. The catalysed reaction is D-erythro-1-(imidazol-4-yl)glycerol 3-phosphate = 3-(imidazol-4-yl)-2-oxopropyl phosphate + H2O. The protein operates within amino-acid biosynthesis; L-histidine biosynthesis; L-histidine from 5-phospho-alpha-D-ribose 1-diphosphate: step 6/9. The chain is Imidazoleglycerol-phosphate dehydratase from Clavibacter michiganensis subsp. michiganensis (strain NCPPB 382).